A 300-amino-acid chain; its full sequence is Acetylglutamate kinase (300 aa).

Substrate is bound by residues 68-69 (GG), Arg-90, and Asn-195.

Belongs to the acetylglutamate kinase family. ArgB subfamily.

Its subcellular location is the cytoplasm. The catalysed reaction is N-acetyl-L-glutamate + ATP = N-acetyl-L-glutamyl 5-phosphate + ADP. The protein operates within amino-acid biosynthesis; L-arginine biosynthesis; N(2)-acetyl-L-ornithine from L-glutamate: step 2/4. Functionally, catalyzes the ATP-dependent phosphorylation of N-acetyl-L-glutamate. This is Acetylglutamate kinase from Azotobacter vinelandii (strain DJ / ATCC BAA-1303).